The following is a 491-amino-acid chain: NADH-quinone oxidoreductase subunit N (491 aa).

The next 14 membrane-spanning stretches (helical) occupy residues 6–26, 37–57, 69–89, 103–123, 128–148, 163–183, 206–226, 238–258, 273–293, 301–321, 335–355, 379–399, 413–433, and 458–478; these read TLAP…INWI, VAYP…GMNA, LVVI…GLFV, MFAG…IVMI, FLTL…LVAL, FVLG…MYGA, LAFG…AAPF, PTAV…ALFI, QMML…TAIV, LAYS…SGVV, AMFY…IILL, FAFL…TVGF, GMTW…FYYL, and SMLS…AALM.

This sequence belongs to the complex I subunit 2 family. NDH-1 is composed of 14 different subunits. Subunits NuoA, H, J, K, L, M, N constitute the membrane sector of the complex.

It is found in the cell inner membrane. It catalyses the reaction a quinone + NADH + 5 H(+)(in) = a quinol + NAD(+) + 4 H(+)(out). Its function is as follows. NDH-1 shuttles electrons from NADH, via FMN and iron-sulfur (Fe-S) centers, to quinones in the respiratory chain. The immediate electron acceptor for the enzyme in this species is believed to be ubiquinone. Couples the redox reaction to proton translocation (for every two electrons transferred, four hydrogen ions are translocated across the cytoplasmic membrane), and thus conserves the redox energy in a proton gradient. The sequence is that of NADH-quinone oxidoreductase subunit N from Cupriavidus taiwanensis (strain DSM 17343 / BCRC 17206 / CCUG 44338 / CIP 107171 / LMG 19424 / R1) (Ralstonia taiwanensis (strain LMG 19424)).